A 313-amino-acid chain; its full sequence is E3 ubiquitin-protein ligase siah2 (313 aa).

The tract at residues 1–49 is disordered; the sequence is MSRPSSAGPCASKPCGKQKQPPPPPPHAPSLPATISGGPGASAPPAPTA. Pro residues predominate over residues 20–29; it reads QPPPPPPHAP. An RING-type zinc finger spans residues 69–104; sequence CPVCFDYVLPPILQCQAGHLVCNQCRQKLSCCPTCR. Residues 119–311 are SBD; sequence VASAVLFPCK…LGINVTISTC (193 aa). An SIAH-type zinc finger spans residues 122–182; that stretch reads AVLFPCKYAS…VMQHLTHSHK (61 aa). Residues Cys127, Cys134, His146, Cys150, Cys157, Cys164, His176, and His181 each contribute to the Zn(2+) site.

Belongs to the SINA (Seven in absentia) family. Homodimer. As to expression, widely expressed in early embryos until stage 40. It is then expressed in brain, spinal cord and in the developing and mature eye.

The protein localises to the cytoplasm. The catalysed reaction is S-ubiquitinyl-[E2 ubiquitin-conjugating enzyme]-L-cysteine + [acceptor protein]-L-lysine = [E2 ubiquitin-conjugating enzyme]-L-cysteine + N(6)-ubiquitinyl-[acceptor protein]-L-lysine.. It participates in protein modification; protein ubiquitination. In terms of biological role, E3 ubiquitin-protein ligase that mediates ubiquitination and subsequent proteasomal degradation of target proteins. E3 ubiquitin ligases accept ubiquitin from an E2 ubiquitin-conjugating enzyme in the form of a thioester and then directly transfers the ubiquitin to targeted substrates. Involved in eye morphogenesis, probably triggers the ubiquitin-mediated degradation of different substrates. May play a role in the regulation of the cellular clock function. The protein is E3 ubiquitin-protein ligase siah2 (siah2) of Xenopus laevis (African clawed frog).